A 245-amino-acid chain; its full sequence is UDP-2,3-diacylglucosamine hydrolase (245 aa).

Asp-8, His-10, Asp-41, Asn-79, and His-114 together coordinate Mn(2+). Residue 79–80 (NR) participates in substrate binding. Substrate contacts are provided by Asp-122, Ser-160, Asn-164, Lys-167, and His-195. Mn(2+)-binding residues include His-195 and His-197.

The protein belongs to the LpxH family. The cofactor is Mn(2+).

It localises to the cell inner membrane. The enzyme catalyses UDP-2-N,3-O-bis[(3R)-3-hydroxytetradecanoyl]-alpha-D-glucosamine + H2O = 2-N,3-O-bis[(3R)-3-hydroxytetradecanoyl]-alpha-D-glucosaminyl 1-phosphate + UMP + 2 H(+). It participates in glycolipid biosynthesis; lipid IV(A) biosynthesis; lipid IV(A) from (3R)-3-hydroxytetradecanoyl-[acyl-carrier-protein] and UDP-N-acetyl-alpha-D-glucosamine: step 4/6. Its function is as follows. Hydrolyzes the pyrophosphate bond of UDP-2,3-diacylglucosamine to yield 2,3-diacylglucosamine 1-phosphate (lipid X) and UMP by catalyzing the attack of water at the alpha-P atom. Involved in the biosynthesis of lipid A, a phosphorylated glycolipid that anchors the lipopolysaccharide to the outer membrane of the cell. In Photobacterium profundum (strain SS9), this protein is UDP-2,3-diacylglucosamine hydrolase.